Reading from the N-terminus, the 313-residue chain is Nucleotide-binding protein Swit_0399 (313 aa).

Position 20–27 (20–27) interacts with ATP; that stretch reads GMSGSGKK. GTP is bound at residue 73-76; that stretch reads DSRT. The interval 289–313 is disordered; it reads PTVRHRDLTRQKSNAEESTVPGVGS. Over residues 292-303 the composition is skewed to basic and acidic residues; the sequence is RHRDLTRQKSNA.

The protein belongs to the RapZ-like family.

In terms of biological role, displays ATPase and GTPase activities. The polypeptide is Nucleotide-binding protein Swit_0399 (Rhizorhabdus wittichii (strain DSM 6014 / CCUG 31198 / JCM 15750 / NBRC 105917 / EY 4224 / RW1) (Sphingomonas wittichii)).